Consider the following 186-residue polypeptide: Nicotinamide-nucleotide adenylyltransferase (186 aa).

It belongs to the archaeal NMN adenylyltransferase family.

The protein resides in the cytoplasm. The enzyme catalyses beta-nicotinamide D-ribonucleotide + ATP + H(+) = diphosphate + NAD(+). The protein operates within cofactor biosynthesis; NAD(+) biosynthesis; NAD(+) from nicotinamide D-ribonucleotide: step 1/1. The protein is Nicotinamide-nucleotide adenylyltransferase of Thermococcus sibiricus (strain DSM 12597 / MM 739).